Here is a 517-residue protein sequence, read N- to C-terminus: Beta-glucosidase 17 (517 aa).

An N-terminal signal peptide occupies residues 1–23 (MAIKSIFIIIIISIITSISELYA). Residues Q54, H158, and 203-204 (NE) each bind a beta-D-glucoside. Residue E204 is the Proton donor of the active site. Residues C223 and C230 are joined by a disulfide bond. N229 is a glycosylation site (N-linked (GlcNAc...) asparagine). Y346 is an a beta-D-glucoside binding site. N-linked (GlcNAc...) asparagine glycosylation is found at N361 and N371. A beta-D-glucoside is bound by residues E417, W466, 473-474 (EW), and Y482. Catalysis depends on E417, which acts as the Nucleophile. N510 carries N-linked (GlcNAc...) asparagine glycosylation.

This sequence belongs to the glycosyl hydrolase 1 family.

It carries out the reaction Hydrolysis of terminal, non-reducing beta-D-glucosyl residues with release of beta-D-glucose.. This is Beta-glucosidase 17 from Arabidopsis thaliana (Mouse-ear cress).